The sequence spans 84 residues: Large ribosomal subunit protein bL27 (84 aa).

Belongs to the bacterial ribosomal protein bL27 family.

The chain is Large ribosomal subunit protein bL27 from Kocuria rhizophila (strain ATCC 9341 / DSM 348 / NBRC 103217 / DC2201).